The sequence spans 354 residues: Chorismate synthase (354 aa).

NADP(+) is bound at residue arginine 48. Residues 125 to 127 (RAS), glycine 277, 292 to 296 (KPIPS), and arginine 318 contribute to the FMN site.

It belongs to the chorismate synthase family. In terms of assembly, homotetramer. FMNH2 serves as cofactor.

It carries out the reaction 5-O-(1-carboxyvinyl)-3-phosphoshikimate = chorismate + phosphate. It participates in metabolic intermediate biosynthesis; chorismate biosynthesis; chorismate from D-erythrose 4-phosphate and phosphoenolpyruvate: step 7/7. Functionally, catalyzes the anti-1,4-elimination of the C-3 phosphate and the C-6 proR hydrogen from 5-enolpyruvylshikimate-3-phosphate (EPSP) to yield chorismate, which is the branch point compound that serves as the starting substrate for the three terminal pathways of aromatic amino acid biosynthesis. This reaction introduces a second double bond into the aromatic ring system. The protein is Chorismate synthase of Nitratidesulfovibrio vulgaris (strain ATCC 29579 / DSM 644 / CCUG 34227 / NCIMB 8303 / VKM B-1760 / Hildenborough) (Desulfovibrio vulgaris).